Reading from the N-terminus, the 103-residue chain is Cyclotide vitri-A (103 aa).

An N-terminal signal peptide occupies residues 1 to 9; the sequence is AAFALPAFA. The propeptide occupies 10–69; it reads SFEKDVITPAALEAVLNRKAPLSNIMMENDAIVNVIANVKTVISNPVLEEALLKTNHGVN. The cyclopeptide (Gly-Asn) cross-link spans 70 to 99; the sequence is GIPCGESCVWIPCITSAIGCSCKSKVCYRN. 3 disulfide bridges follow: Cys-73-Cys-89, Cys-77-Cys-91, and Cys-82-Cys-96. Residues 100–103 constitute a propeptide that is removed on maturation; it reads SLDN.

This is a cyclic peptide.

In terms of biological role, probably participates in a plant defense mechanism. The sequence is that of Cyclotide vitri-A from Viola biflora (Yellow wood violet).